Reading from the N-terminus, the 208-residue chain is AN1-type zinc finger protein 6 (208 aa).

The segment at S8–N42 adopts an A20-type zinc-finger fold. 4 residues coordinate Zn(2+): C14, C18, C30, and C33. Positions Q41–D68 are enriched in polar residues. A disordered region spans residues Q41–E140. Phosphoserine is present on S49. Low complexity predominate over residues Q75–S94. 2 stretches are compositionally biased toward polar residues: residues L95–V110 and L120–E133. The AN1-type zinc-finger motif lies at K143–A189. Zn(2+) contacts are provided by C149, C152, C163, C165, C170, H173, H179, and C181. Position 204 is an N6-acetyllysine (K204).

In terms of assembly, interacts with PKN1. Interacts with TRAF2. Interacts with mono- and polyubiquitin. Interacts with PEX6. Interacts with PEX5 (Cys-linked ubiquitinated).

The protein resides in the cytoplasm. In terms of biological role, involved in regulation of TNF-alpha induced NF-kappa-B activation and apoptosis. Involved in modulation of 'Lys-48'-linked polyubiquitination status of TRAF2 and decreases association of TRAF2 with RIPK1. Required for PTS1 target sequence-dependent protein import into peroxisomes and PEX5 stability; may cooperate with PEX6. In vitro involved in PEX5 export from the cytosol to peroxisomes. This chain is AN1-type zinc finger protein 6 (ZFAND6), found in Pongo abelii (Sumatran orangutan).